A 434-amino-acid polypeptide reads, in one-letter code: Serine hydroxymethyltransferase (434 aa).

(6S)-5,6,7,8-tetrahydrofolate contacts are provided by residues leucine 133 and 137–139 (GHL). Position 242 is an N6-(pyridoxal phosphate)lysine (lysine 242).

This sequence belongs to the SHMT family. In terms of assembly, homodimer. Requires pyridoxal 5'-phosphate as cofactor.

The protein resides in the cytoplasm. The catalysed reaction is (6R)-5,10-methylene-5,6,7,8-tetrahydrofolate + glycine + H2O = (6S)-5,6,7,8-tetrahydrofolate + L-serine. Its pathway is one-carbon metabolism; tetrahydrofolate interconversion. The protein operates within amino-acid biosynthesis; glycine biosynthesis; glycine from L-serine: step 1/1. In terms of biological role, catalyzes the reversible interconversion of serine and glycine with tetrahydrofolate (THF) serving as the one-carbon carrier. This reaction serves as the major source of one-carbon groups required for the biosynthesis of purines, thymidylate, methionine, and other important biomolecules. Also exhibits THF-independent aldolase activity toward beta-hydroxyamino acids, producing glycine and aldehydes, via a retro-aldol mechanism. The chain is Serine hydroxymethyltransferase from Methylorubrum populi (strain ATCC BAA-705 / NCIMB 13946 / BJ001) (Methylobacterium populi).